Consider the following 459-residue polypeptide: Ribulose bisphosphate carboxylase (459 aa).

A substrate-binding site is contributed by asparagine 111. Residue lysine 166 is the Proton acceptor of the active site. Lysine 168 contributes to the substrate binding site. The Mg(2+) site is built by lysine 191, aspartate 193, and glutamate 194. N6-carboxylysine is present on lysine 191. Catalysis depends on histidine 287, which acts as the Proton acceptor. Arginine 288, histidine 321, and serine 368 together coordinate substrate.

Belongs to the RuBisCO large chain family. Type II subfamily. Homodimer. Mg(2+) is required as a cofactor.

It carries out the reaction 2 (2R)-3-phosphoglycerate + 2 H(+) = D-ribulose 1,5-bisphosphate + CO2 + H2O. It catalyses the reaction D-ribulose 1,5-bisphosphate + O2 = 2-phosphoglycolate + (2R)-3-phosphoglycerate + 2 H(+). RuBisCO catalyzes two reactions: the carboxylation of D-ribulose 1,5-bisphosphate, the primary event in carbon dioxide fixation, as well as the oxidative fragmentation of the pentose substrate. Both reactions occur simultaneously and in competition at the same active site. The chain is Ribulose bisphosphate carboxylase from Cereibacter sphaeroides (Rhodobacter sphaeroides).